The following is a 400-amino-acid chain: Acetate kinase (400 aa).

Asn10 is a binding site for Mg(2+). Residue Lys17 coordinates ATP. Residue Arg91 participates in substrate binding. Asp150 acts as the Proton donor/acceptor in catalysis. ATP-binding positions include His210–Gly214, Asp285–Arg287, and Gly333–Asn337. Glu387 is a Mg(2+) binding site.

It belongs to the acetokinase family. In terms of assembly, homodimer. The cofactor is Mg(2+). Requires Mn(2+) as cofactor.

The protein resides in the cytoplasm. The catalysed reaction is acetate + ATP = acetyl phosphate + ADP. Its pathway is metabolic intermediate biosynthesis; acetyl-CoA biosynthesis; acetyl-CoA from acetate: step 1/2. In terms of biological role, catalyzes the formation of acetyl phosphate from acetate and ATP. Can also catalyze the reverse reaction. The sequence is that of Acetate kinase from Pectobacterium atrosepticum (strain SCRI 1043 / ATCC BAA-672) (Erwinia carotovora subsp. atroseptica).